A 203-amino-acid chain; its full sequence is Urease accessory protein UreG (203 aa).

Position 14–21 (14–21 (GPVGSGKT)) interacts with GTP.

Belongs to the SIMIBI class G3E GTPase family. UreG subfamily. As to quaternary structure, homodimer. UreD, UreF and UreG form a complex that acts as a GTP-hydrolysis-dependent molecular chaperone, activating the urease apoprotein by helping to assemble the nickel containing metallocenter of UreC. The UreE protein probably delivers the nickel.

The protein localises to the cytoplasm. Functionally, facilitates the functional incorporation of the urease nickel metallocenter. This process requires GTP hydrolysis, probably effectuated by UreG. The sequence is that of Urease accessory protein UreG from Sinorhizobium medicae (strain WSM419) (Ensifer medicae).